We begin with the raw amino-acid sequence, 111 residues long: uncharacterized protein (111 aa).

The next 2 helical transmembrane spans lie at 27–47 (IIVLFCLLCIIVTLGVIGYKF) and 80–100 (IFTGIYAVLVGVFFISVISAI).

It is found in the membrane. This is an uncharacterized protein from Acanthamoeba polyphaga (Amoeba).